A 318-amino-acid chain; its full sequence is D-alanine--D-alanine ligase (318 aa).

The ATP-grasp domain maps to 116 to 315; that stretch reads KQVWQSLGLP…FEQLSLAVLA (200 aa). 146–201 contacts ATP; it reads MSRLGDLVMVKPAQEGSSIGMAKVSNAQQLAAAIQQAFEYDDKVLLEQFIQGSEYT. Mg(2+) is bound by residues aspartate 269, glutamate 282, and asparagine 284.

It belongs to the D-alanine--D-alanine ligase family. Mg(2+) serves as cofactor. It depends on Mn(2+) as a cofactor.

It is found in the cytoplasm. It carries out the reaction 2 D-alanine + ATP = D-alanyl-D-alanine + ADP + phosphate + H(+). It functions in the pathway cell wall biogenesis; peptidoglycan biosynthesis. Its function is as follows. Cell wall formation. This is D-alanine--D-alanine ligase from Pseudoalteromonas atlantica (strain T6c / ATCC BAA-1087).